Here is a 271-residue protein sequence, read N- to C-terminus: Isoprenyl transferase (271 aa).

Asp-35 is a catalytic residue. Position 35 (Asp-35) interacts with Mg(2+). Residues 36–39, Trp-40, Arg-48, His-52, and 80–82 contribute to the substrate site; these read GNGR and STE. Asn-83 serves as the catalytic Proton acceptor. Substrate contacts are provided by residues Trp-84, Arg-86, Arg-207, and 213-215; that span reads RIS. A Mg(2+)-binding site is contributed by Glu-226.

Belongs to the UPP synthase family. In terms of assembly, homodimer. Mg(2+) is required as a cofactor.

Functionally, catalyzes the condensation of isopentenyl diphosphate (IPP) with allylic pyrophosphates generating different type of terpenoids. The polypeptide is Isoprenyl transferase (Enterococcus faecalis (strain ATCC 700802 / V583)).